A 357-amino-acid polypeptide reads, in one-letter code: Sorbitol dehydrogenase (357 aa).

Residue Ala2 is modified to N-acetylalanine. Cys45 lines the Zn(2+) pocket. Tyr51 is a substrate binding site. Positions 70 and 71 each coordinate Zn(2+). Residue Glu156 coordinates substrate. 3 residues coordinate NAD(+): Ile184, Asp204, and Arg209. Phosphoserine occurs at positions 211 and 225. Residues 273–275 (VGL) and 297–299 (VFR) contribute to the NAD(+) site. Residues Arg299 and Tyr300 each coordinate substrate.

The protein belongs to the zinc-containing alcohol dehydrogenase family. Homotetramer. It depends on Zn(2+) as a cofactor. Expressed in liver. Expressed in kidney and epithelial cells of both benign and malignant prostate tissue. Expressed in epididymis (at protein level).

The protein localises to the mitochondrion membrane. The protein resides in the cell projection. It localises to the cilium. It is found in the flagellum. The enzyme catalyses keto-D-fructose + NADH + H(+) = D-sorbitol + NAD(+). It catalyses the reaction L-threitol + NAD(+) = L-erythrulose + NADH + H(+). It carries out the reaction xylitol + NAD(+) = D-xylulose + NADH + H(+). The catalysed reaction is ribitol + NAD(+) = D-ribulose + NADH + H(+). The enzyme catalyses (R,R)-butane-2,3-diol + NAD(+) = (R)-acetoin + NADH + H(+). It catalyses the reaction L-iditol + NAD(+) = keto-L-sorbose + NADH + H(+). With respect to regulation, inhibited by CP-166,572, an inhibitor that is competitive with fructose. Also competitively inhibited by phenanthroline and 4-methylpyrazole in vitro. In terms of biological role, polyol dehydrogenase that catalyzes the reversible NAD(+)-dependent oxidation of various sugar alcohols. Is mostly active with D-sorbitol (D-glucitol), L-threitol, xylitol and ribitol as substrates, leading to the C2-oxidized products D-fructose, L-erythrulose, D-xylulose, and D-ribulose, respectively. Is a key enzyme in the polyol pathway that interconverts glucose and fructose via sorbitol, which constitutes an important alternate route for glucose metabolism. The polyol pathway is believed to be involved in the etiology of diabetic complications, such as diabetic neuropathy and retinopathy, induced by hyperglycemia. May play a role in sperm motility by using sorbitol as an alternative energy source for sperm motility. May have a more general function in the metabolism of secondary alcohols since it also catalyzes the stereospecific oxidation of (2R,3R)-2,3-butanediol. To a lesser extent, can also oxidize L-arabinitol, galactitol and D-mannitol and glycerol in vitro. Oxidizes neither ethanol nor other primary alcohols. Cannot use NADP(+) as the electron acceptor. The sequence is that of Sorbitol dehydrogenase (SORD) from Homo sapiens (Human).